Here is a 454-residue protein sequence, read N- to C-terminus: MNVSVVILAAGAGTRMKSHIPKVLHKICGKEMLFYSIDEALKISDDVHIVLFHQENVIKERLLCAYKQAYADGALHFHLQDHAHYPGTGGALMQGQNAGANAKKPFCYQYDEILILNGDMPLVCSQTLKSLCQNKAQIVMSVLHLQNPDGYGRVVMESGVVQRIIEQKDAKESELLIKDVNAGVYKIHKSILDLYLPQVGNANNQQEFYLTDVVFYAKENGIEIAALEVKEEEFMGVNSKIQLACAQEIMLQRLREKAMEQGVIMNLPHTIYLESNVTFSGECIIEQGVQILGDSHISDSHIKAHSVIEQSIIESSDVGPLAHIRPKSHIKNTHIGNFVETKSSTLRGVKVGHLSYLGDCEIDEGSNIGAGVITCNYDGKAKHKTTIGKSVFVGSDVQLIAPLNIESNVLIGAGSTITKDIEYGDLALSRVAQQNIKDGFFKFFSDKNEEKKEQ.

The tract at residues 1 to 240 is pyrophosphorylase; it reads MNVSVVILAA…EEEFMGVNSK (240 aa). Residues 8-11, Lys22, and 87-88 contribute to the UDP-N-acetyl-alpha-D-glucosamine site; these read LAAG and GT. Asp119 provides a ligand contact to Mg(2+). Positions 152, 166, 181, and 238 each coordinate UDP-N-acetyl-alpha-D-glucosamine. Asn238 contacts Mg(2+). The tract at residues 241–261 is linker; sequence IQLACAQEIMLQRLREKAMEQ. The tract at residues 262-454 is N-acetyltransferase; that stretch reads GVIMNLPHTI…SDKNEEKKEQ (193 aa). UDP-N-acetyl-alpha-D-glucosamine is bound by residues Arg325 and Lys342. The active-site Proton acceptor is the His353. UDP-N-acetyl-alpha-D-glucosamine contacts are provided by Tyr356 and Asn367. Residues Ala370, 376 to 377, Ser395, Ala413, and Arg430 contribute to the acetyl-CoA site; that span reads NY.

The protein in the N-terminal section; belongs to the N-acetylglucosamine-1-phosphate uridyltransferase family. In the C-terminal section; belongs to the transferase hexapeptide repeat family. In terms of assembly, homotrimer. Mg(2+) serves as cofactor.

Its subcellular location is the cytoplasm. It carries out the reaction alpha-D-glucosamine 1-phosphate + acetyl-CoA = N-acetyl-alpha-D-glucosamine 1-phosphate + CoA + H(+). The catalysed reaction is N-acetyl-alpha-D-glucosamine 1-phosphate + UTP + H(+) = UDP-N-acetyl-alpha-D-glucosamine + diphosphate. The protein operates within nucleotide-sugar biosynthesis; UDP-N-acetyl-alpha-D-glucosamine biosynthesis; N-acetyl-alpha-D-glucosamine 1-phosphate from alpha-D-glucosamine 6-phosphate (route II): step 2/2. It participates in nucleotide-sugar biosynthesis; UDP-N-acetyl-alpha-D-glucosamine biosynthesis; UDP-N-acetyl-alpha-D-glucosamine from N-acetyl-alpha-D-glucosamine 1-phosphate: step 1/1. It functions in the pathway bacterial outer membrane biogenesis; LPS lipid A biosynthesis. In terms of biological role, catalyzes the last two sequential reactions in the de novo biosynthetic pathway for UDP-N-acetylglucosamine (UDP-GlcNAc). The C-terminal domain catalyzes the transfer of acetyl group from acetyl coenzyme A to glucosamine-1-phosphate (GlcN-1-P) to produce N-acetylglucosamine-1-phosphate (GlcNAc-1-P), which is converted into UDP-GlcNAc by the transfer of uridine 5-monophosphate (from uridine 5-triphosphate), a reaction catalyzed by the N-terminal domain. This chain is Bifunctional protein GlmU, found in Helicobacter hepaticus (strain ATCC 51449 / 3B1).